Consider the following 564-residue polypeptide: MSVQQLISRLTDIVGSRYIITDPTKTEAYRSGYRFGTGNALAVVRPATLLEFWNIVKVCVEHDVIVINQAANTGLTGGSTPDGNDYDRDIVVINTMRIDGIQLINNASQVICLPGSTLNELENQLKPFGREPHSVIGSSCIGASVIGGICNNSGGALVQRGPAYTEMALYAQLNEKGELELKNHLGIDLGETPEEILTNLQEKRYQVKDIRQDCGHGHDHYYCNYVRQVDEGSPARFNADPARHYEASGCAGKLAVFAVRLDTFPLEKETAVFYIGTNQTSVLSDIRRHMLVNFEVLPISGEYIHRDAFDIAAKYGKDTFWVIKKFGTHWLPKLFSLKSNVDRIGKKFFFLPQHLSDKFMQTVSKFIPEHLPQSLWDYRNKYEHHLIIKMGGKGIQEAREYLESYIADGSKGGYFECNAIETQAAMLHRFAVASAAIRYRAIHEKEVEEIVALDVALRRNDQDWFEVLPPEIDNRIISKLYYGHFMCHVFHQDYIVKKGYDYEELEYEMLKLLDKRGAQYPAEHNVGHLYEAKPTLRKFYKELDPTNSFNPGIGKTTRKKYWAE.

The FAD-binding PCMH-type domain maps to 36-207; the sequence is GTGNALAVVR…TNLQEKRYQV (172 aa). Residues 70–74, 78–79, G137, S144, G154, and V256 each bind FAD; these read AANTG and GS.

Belongs to the quinone-dependent D-lactate dehydrogenase family. FAD is required as a cofactor.

It localises to the cell inner membrane. It catalyses the reaction (R)-lactate + a quinone = a quinol + pyruvate. In terms of biological role, catalyzes the oxidation of D-lactate to pyruvate. The polypeptide is Quinone-dependent D-lactate dehydrogenase (Haemophilus influenzae (strain ATCC 51907 / DSM 11121 / KW20 / Rd)).